The primary structure comprises 324 residues: Phosphomevalonate decarboxylase (324 aa).

Belongs to the phosphomevalonate decarboxylase family.

The catalysed reaction is (R)-5-phosphomevalonate + ATP = isopentenyl phosphate + ADP + phosphate + CO2. Is strongly inhibited by 6-fluoromevalonate monophosphate but shows negligible inhibition by 6-fluoromevalonate diphosphate (a potent inhibitor of the classical mevalonate pathway). In terms of biological role, catalyzes the decarboxylation of mevalonate 5-phosphate (MVAP) to isopentenyl phosphate (IP). Functions in an alternate mevalonate (MVA) pathway leading to isopentenyl diphosphate (IPP), a key precursor for the biosynthesis of isoprenoid compounds such as archaeal membrane lipids. The chain is Phosphomevalonate decarboxylase (mvaD) from Haloferax volcanii (strain ATCC 29605 / DSM 3757 / JCM 8879 / NBRC 14742 / NCIMB 2012 / VKM B-1768 / DS2) (Halobacterium volcanii).